The following is a 197-amino-acid chain: A-type ATP synthase subunit E 2 (197 aa).

The protein belongs to the V-ATPase E subunit family. In terms of assembly, has multiple subunits with at least A(3), B(3), C, D, E, F, H, I and proteolipid K(x).

The protein resides in the cell membrane. Component of the A-type ATP synthase that produces ATP from ADP in the presence of a proton gradient across the membrane. The polypeptide is A-type ATP synthase subunit E 2 (Methanospirillum hungatei JF-1 (strain ATCC 27890 / DSM 864 / NBRC 100397 / JF-1)).